A 1063-amino-acid polypeptide reads, in one-letter code: Structural polyprotein (1063 aa).

Positions 23–131 are disordered; it reads LRAELAAGAS…LGPPTNPFQA (109 aa). The segment at 30 to 69 is human C1QBP/SF2P32-binding; the sequence is GASQLRRPRPPRQRDSSTSGDDSGRDSGGPRRRRGNRGRG. Serine 46 carries the post-translational modification Phosphoserine; by host. Over residues 59-69 the composition is skewed to basic residues; sequence PRRRRGNRGRG. Residues 70 to 87 are compositionally biased toward basic and acidic residues; it reads QRKDWSKAPPPPEERQES. Residues 93 to 107 are compositionally biased toward pro residues; that stretch reads VPKPPRAPPQPPQPP. Cysteine 153 and cysteine 197 form a disulfide bridge. The tract at residues 279–300 is functions as E2 signal peptide; the sequence is GAPQVFLAGLLLAAVAVGTARA. Topologically, residues 301–534 are extracellular; the sequence is GLQPRTDIAA…LWLATANALS (234 aa). The segment at 305 to 327 is disordered; it reads RTDIAAPPAPPQAPRAHGKHYGH. 4 N-linked (GlcNAc...) asparagine; by host glycosylation sites follow: asparagine 353, asparagine 371, asparagine 410, and asparagine 429. A helical transmembrane segment spans residues 535–555; that stretch reads LDHALAAVVLLVPWVLIFMLC. Over 556–582 the chain is Cytoplasmic; that stretch reads RRACRRRGAAAALTAVVLQGYNPPAYG. Positions 562–582 are functions as E1 signal peptide; that stretch reads RGAAAALTAVVLQGYNPPAYG. At 583-1028 the chain is on the extracellular side; that stretch reads EEAFTYLCTA…QTWAEWAAAH (446 aa). Intrachain disulfides connect cysteine 590-cysteine 595, cysteine 619-cysteine 824, cysteine 641-cysteine 653, cysteine 699-cysteine 712, cysteine 758-cysteine 767, cysteine 807-cysteine 817, cysteine 931-cysteine 934, and cysteine 950-cysteine 983. Residue asparagine 658 is glycosylated (N-linked (GlcNAc...) asparagine; by host). 2 residues coordinate Ca(2+): asparagine 670 and alanine 671. Residues aspartate 718 and threonine 719 each coordinate Ca(2+). 2 N-linked (GlcNAc...) asparagine; by host glycosylation sites follow: asparagine 759 and asparagine 791. 2 O-linked (GalNAc...) threonine; by host glycosylation sites follow: threonine 1011 and threonine 1012. The chain crosses the membrane as a helical span at residues 1029-1049; sequence WWQLTLGAICALLLAGLLACC. The Extracellular segment spans residues 1050-1063; that stretch reads AKCLYHLRGAIAPR.

Homodimer; further assembles into homooligomer. Interacts with human C1QBP. Interacts (via N-terminus) with protease/methyltransferase p150. In terms of assembly, heterodimer with spike glycoprotein E2. As to quaternary structure, heterodimer with spike glycoprotein E1. In terms of processing, structural polyprotein: Specific enzymatic cleavages in vivo yield mature proteins. Two signal peptidase-mediated cleavages within the polyprotein produce the structural proteins capsid, E2, and E1. The E2 signal peptide remains attached to the C-terminus of the capsid protein after cleavage by the signal peptidase. Another signal peptide at E2 C-terminus directs E1 to the ER, with a similar mechanism. Contains three N-linked oligosaccharides. Post-translationally, capsid is phosphorylated on Ser-46 by host. This phosphorylation negatively regulates capsid protein RNA-binding activity. Dephosphorylated by human PP1A.

The protein localises to the virion. Its subcellular location is the host cytoplasm. The protein resides in the host mitochondrion. It localises to the virion membrane. It is found in the host Golgi apparatus membrane. Functionally, capsid protein interacts with genomic RNA and assembles into icosahedric core particles 65-70 nm in diameter. The resulting nucleocapsid eventually associates with the cytoplasmic domain of E2 at the cell membrane, leading to budding and formation of mature virions from host Golgi membranes. Phosphorylation negatively regulates RNA-binding activity, possibly delaying virion assembly during the viral replication phase. Capsid protein dimerizes and becomes disulfide-linked in the virion. Modulates genomic RNA replication. Modulates subgenomic RNA synthesis by interacting with human C1QBP/SF2P32. Induces both perinuclear clustering of mitochondria and the formation of electron-dense intermitochondrial plaques, both hallmarks of rubella virus infected cells. Induces apoptosis when expressed in transfected cells. In terms of biological role, responsible for viral attachment to target host cell, by binding to the cell receptor. Its transport to the plasma membrane depends on interaction with E1 protein. The surface glycoproteins display an irregular helical organization and a pseudo-tetrameric inner nucleocapsid arrangement. Class II viral fusion protein. Fusion activity is inactive as long as E1 is bound to E2 in mature virion. After virus attachment to target cell and clathrin-mediated endocytosis, acidification of the endosome would induce dissociation of E1/E2 heterodimer and concomitant trimerization of the E1 subunits. This E1 homotrimer is fusion active, and promotes release of viral nucleocapsid in cytoplasm after endosome and viral membrane fusion. The cytoplasmic tail of spike glycoprotein E1 modulates virus release. The surface glycoproteins display an irregular helical organization and a pseudo-tetrameric inner nucleocapsid arrangement. This Homo sapiens (Human) protein is Structural polyprotein.